The chain runs to 131 residues: Peptide methionine sulfoxide reductase MsrB (131 aa).

One can recognise a MsrB domain in the interval 8–130 (DAEWRAQLTD…NSVCLDLKRS (123 aa)). The Zn(2+) site is built by C47, C50, C96, and C99. The active-site Nucleophile is C119.

This sequence belongs to the MsrB Met sulfoxide reductase family. Zn(2+) is required as a cofactor.

The catalysed reaction is L-methionyl-[protein] + [thioredoxin]-disulfide + H2O = L-methionyl-(R)-S-oxide-[protein] + [thioredoxin]-dithiol. This is Peptide methionine sulfoxide reductase MsrB from Alkalilimnicola ehrlichii (strain ATCC BAA-1101 / DSM 17681 / MLHE-1).